The following is a 69-amino-acid chain: DNA gyrase inhibitor YacG (69 aa).

Residues Cys-7, Cys-10, Cys-26, and Cys-30 each coordinate Zn(2+).

It belongs to the DNA gyrase inhibitor YacG family. As to quaternary structure, interacts with GyrB. Zn(2+) serves as cofactor.

Functionally, inhibits all the catalytic activities of DNA gyrase by preventing its interaction with DNA. Acts by binding directly to the C-terminal domain of GyrB, which probably disrupts DNA binding by the gyrase. The chain is DNA gyrase inhibitor YacG from Shewanella baltica (strain OS195).